Reading from the N-terminus, the 235-residue chain is Purine nucleoside phosphorylase DeoD-type (235 aa).

Histidine 4 serves as a coordination point for a purine D-ribonucleoside. Residues glycine 20, arginine 24, arginine 43, and 87 to 90 contribute to the phosphate site; that span reads RVGT. Residues 180-182 and 204-205 contribute to the a purine D-ribonucleoside site; these read EME and SD. The active-site Proton donor is aspartate 205.

Belongs to the PNP/UDP phosphorylase family. Homohexamer; trimer of homodimers.

The catalysed reaction is a purine D-ribonucleoside + phosphate = a purine nucleobase + alpha-D-ribose 1-phosphate. It catalyses the reaction a purine 2'-deoxy-D-ribonucleoside + phosphate = a purine nucleobase + 2-deoxy-alpha-D-ribose 1-phosphate. In terms of biological role, catalyzes the reversible phosphorolytic breakdown of the N-glycosidic bond in the beta-(deoxy)ribonucleoside molecules, with the formation of the corresponding free purine bases and pentose-1-phosphate. This chain is Purine nucleoside phosphorylase DeoD-type, found in Oceanobacillus iheyensis (strain DSM 14371 / CIP 107618 / JCM 11309 / KCTC 3954 / HTE831).